Reading from the N-terminus, the 59-residue chain is Temporin-CDYe (59 aa).

The first 22 residues, 1–22 (MFTLKKSMLLLLFLGTISLTLC), serve as a signal peptide directing secretion. Residues 23 to 42 (EEERDANEEEENGGEVKVEE) constitute a propeptide that is removed on maturation.

The protein belongs to the frog skin active peptide (FSAP) family. Temporin subfamily. Expressed by the skin glands.

It is found in the secreted. In terms of biological role, antimicrobial peptide. The polypeptide is Temporin-CDYe (Rana dybowskii (Dybovsky's frog)).